The chain runs to 153 residues: Troponin C (153 aa).

EF-hand domains lie at 9–44 (EQVQ…LGQT), 45–80 (FEEN…FLVE), 85–120 (AMQE…LDDK), and 121–153 (LTED…MTGD). Ca(2+) is bound by residues D58, D60, S62, E64, and E69. Ca(2+)-binding residues include D134, D136, S138, T140, and E145.

The protein belongs to the troponin C family.

Functionally, troponin is the central regulatory protein of striated muscle contraction. Tn consists of three components: Tn-I which is the inhibitor of actomyosin ATPase, Tn-T which contains the binding site for tropomyosin and Tn-C. The binding of calcium to Tn-C abolishes the inhibitory action of Tn on actin filaments. The polypeptide is Troponin C (Tyrophagus putrescentiae (Mold mite)).